A 434-amino-acid polypeptide reads, in one-letter code: D-inositol 3-phosphate glycosyltransferase (434 aa).

A 1D-myo-inositol 3-phosphate-binding site is contributed by His-26. Residues 32–33 (QP) and Gly-40 each bind UDP-N-acetyl-alpha-D-glucosamine. Residues 37–42 (DAGGMN), Lys-95, Tyr-128, Thr-152, and Arg-172 each bind 1D-myo-inositol 3-phosphate. Positions 246 and 251 each coordinate UDP-N-acetyl-alpha-D-glucosamine. Mg(2+) contacts are provided by Tyr-321, Arg-322, and Ala-324. 2 residues coordinate UDP-N-acetyl-alpha-D-glucosamine: Glu-334 and Glu-342. Mg(2+) is bound at residue Thr-348.

It belongs to the glycosyltransferase group 1 family. MshA subfamily. As to quaternary structure, homodimer.

The enzyme catalyses 1D-myo-inositol 3-phosphate + UDP-N-acetyl-alpha-D-glucosamine = 1D-myo-inositol 2-acetamido-2-deoxy-alpha-D-glucopyranoside 3-phosphate + UDP + H(+). In terms of biological role, catalyzes the transfer of a N-acetyl-glucosamine moiety to 1D-myo-inositol 3-phosphate to produce 1D-myo-inositol 2-acetamido-2-deoxy-glucopyranoside 3-phosphate in the mycothiol biosynthesis pathway. This is D-inositol 3-phosphate glycosyltransferase from Thermobifida fusca (strain YX).